The chain runs to 388 residues: Succinyl-diaminopimelate desuccinylase (388 aa).

Histidine 72 provides a ligand contact to Zn(2+). Aspartate 74 is a catalytic residue. Aspartate 105 lines the Zn(2+) pocket. Glutamate 139 acts as the Proton acceptor in catalysis. Residues glutamate 140, glutamate 168, and histidine 353 each contribute to the Zn(2+) site.

The protein belongs to the peptidase M20A family. DapE subfamily. In terms of assembly, homodimer. Zn(2+) serves as cofactor. The cofactor is Co(2+).

The catalysed reaction is N-succinyl-(2S,6S)-2,6-diaminopimelate + H2O = (2S,6S)-2,6-diaminopimelate + succinate. The protein operates within amino-acid biosynthesis; L-lysine biosynthesis via DAP pathway; LL-2,6-diaminopimelate from (S)-tetrahydrodipicolinate (succinylase route): step 3/3. Functionally, catalyzes the hydrolysis of N-succinyl-L,L-diaminopimelic acid (SDAP), forming succinate and LL-2,6-diaminopimelate (DAP), an intermediate involved in the bacterial biosynthesis of lysine and meso-diaminopimelic acid, an essential component of bacterial cell walls. The chain is Succinyl-diaminopimelate desuccinylase from Orientia tsutsugamushi (strain Ikeda) (Rickettsia tsutsugamushi).